A 163-amino-acid polypeptide reads, in one-letter code: Allophycocyanin alpha-B chain (163 aa).

Asn71 is subject to N4-methylasparagine. Cys81 contributes to the (2R,3E)-phycocyanobilin binding site.

The protein belongs to the phycobiliprotein family. In terms of processing, contains one covalently linked bilin chromophore.

It is found in the plastid. The protein resides in the chloroplast thylakoid membrane. Functionally, allophycocyanin is a photosynthetic bile pigment-protein complex with maximum absorption at approximately 650 nanometers. The protein is Allophycocyanin alpha-B chain (apcD) of Cyanidium caldarium (Red alga).